The primary structure comprises 64 residues: Large ribosomal subunit protein uL30 (64 aa).

Belongs to the universal ribosomal protein uL30 family. As to quaternary structure, part of the 50S ribosomal subunit.

This chain is Large ribosomal subunit protein uL30, found in Rhodopseudomonas palustris (strain HaA2).